Here is a 314-residue protein sequence, read N- to C-terminus: Methionyl-tRNA formyltransferase (314 aa).

112-115 (SLLP) serves as a coordination point for (6S)-5,6,7,8-tetrahydrofolate.

It belongs to the Fmt family.

It catalyses the reaction L-methionyl-tRNA(fMet) + (6R)-10-formyltetrahydrofolate = N-formyl-L-methionyl-tRNA(fMet) + (6S)-5,6,7,8-tetrahydrofolate + H(+). Functionally, attaches a formyl group to the free amino group of methionyl-tRNA(fMet). The formyl group appears to play a dual role in the initiator identity of N-formylmethionyl-tRNA by promoting its recognition by IF2 and preventing the misappropriation of this tRNA by the elongation apparatus. In Legionella pneumophila (strain Corby), this protein is Methionyl-tRNA formyltransferase.